Reading from the N-terminus, the 357-residue chain is MRVYPTFFRLAFSWMDAERAHRIGFRAIRLAHSSGAGRVLAKFTAPAPSLQTTAFGITFPSPFGLAAGFDKEGHGIEALTELGFGHVEVGTITGQAQPGNEKPRLFRLVEDKAVINRMGFNNDGATAVAPRLKSARAALQRRHPGVRPVIGVNIGKSKVVELEDAASDYLVSARSLAPAADYLVVNVSSPNTPGLRLLQNVETLRPLLKAVGEEADKAAGRHVPLLVKIAPDLTDEDIDDVAKLALDLGLDGIIATNTTIGREGLTSDPEKIRDCGPGGLSGAPLKARSLEVLRRLKEATGGSLTLVSVGGVENARDVQERLDAGATLVQGYTAFLYEGPFWAARINRQLAKHPARR.

FMN is bound by residues alanine 67 to lysine 71 and threonine 91. Position 71 (lysine 71) interacts with substrate. Residue asparagine 116–phenylalanine 120 participates in substrate binding. FMN-binding residues include asparagine 153 and asparagine 186. Asparagine 186 lines the substrate pocket. Residue serine 189 is the Nucleophile of the active site. Asparagine 191 lines the substrate pocket. Lysine 228 and threonine 256 together coordinate FMN. Asparagine 257–threonine 258 is a substrate binding site. Residues glycine 282, glycine 311, and tyrosine 332–threonine 333 contribute to the FMN site.

It belongs to the dihydroorotate dehydrogenase family. Type 2 subfamily. Monomer. It depends on FMN as a cofactor.

The protein localises to the cell membrane. It catalyses the reaction (S)-dihydroorotate + a quinone = orotate + a quinol. It functions in the pathway pyrimidine metabolism; UMP biosynthesis via de novo pathway; orotate from (S)-dihydroorotate (quinone route): step 1/1. Catalyzes the conversion of dihydroorotate to orotate with quinone as electron acceptor. This chain is Dihydroorotate dehydrogenase (quinone), found in Arthrobacter sp. (strain FB24).